Here is a 343-residue protein sequence, read N- to C-terminus: uncharacterized protein (343 aa).

This sequence belongs to the IIV-6 219L family.

This is an uncharacterized protein from Invertebrate iridescent virus 6 (IIV-6).